A 517-amino-acid chain; its full sequence is V-type proton ATPase subunit B (517 aa).

Ser4 carries the phosphoserine modification. A Glycyl lysine isopeptide (Lys-Gly) (interchain with G-Cter in ubiquitin) cross-link involves residue Lys14. Ser137 carries the phosphoserine modification. An ATP-binding site is contributed by Arg381. The interval 487–517 is disordered; that stretch reads RARDDADEDEEDPDTRSSGKKKDASQEESLI. Residues 500 to 511 show a composition bias toward basic and acidic residues; it reads DTRSSGKKKDAS. A phosphoserine mark is found at Ser503 and Ser504. A Glycyl lysine isopeptide (Lys-Gly) (interchain with G-Cter in ubiquitin) cross-link involves residue Lys508. Ser511 carries the phosphoserine; by ATM or ATR modification. The residue at position 515 (Ser515) is a Phosphoserine.

Belongs to the ATPase alpha/beta chains family. V-ATPase is a heteromultimeric enzyme composed of a peripheral catalytic V1 complex (components A to H) attached to an integral membrane V0 proton pore complex (components: a, c, c', c'', d, e, f and VOA1). Interacts with RAV1 and RAV2 components of the RAVE complex, which are essential for the stability and assembly of V-ATPase.

Its subcellular location is the vacuole membrane. In terms of biological role, non-catalytic subunit of the V1 complex of vacuolar(H+)-ATPase (V-ATPase), a multisubunit enzyme composed of a peripheral complex (V1) that hydrolyzes ATP and a membrane integral complex (V0) that translocates protons. V-ATPase is responsible for acidifying and maintaining the pH of intracellular compartments. The protein is V-type proton ATPase subunit B (VMA2) of Saccharomyces cerevisiae (strain ATCC 204508 / S288c) (Baker's yeast).